Reading from the N-terminus, the 396-residue chain is N-acyl-phosphatidylethanolamine-hydrolyzing phospholipase D (396 aa).

N-acetylmethionine is present on methionine 1. Composition is skewed to polar residues over residues 1–12 (MDENENSQSPAP) and 26–37 (NSVQNSGGSESS). Residues 1–41 (MDENENSQSPAPSHQYPKETLRKRQNSVQNSGGSESSRLSR) are disordered. Zn(2+) is bound by residues histidine 185 and histidine 187. Residue tyrosine 188 participates in an N-acyl-1,2-diacyl-sn-glycero-3-phosphoethanolamine binding. Zn(2+) is bound by residues aspartate 189, histidine 190, and histidine 253. Lysine 256 is a deoxycholate binding site. A Zn(2+)-binding site is contributed by aspartate 284. Histidine 321 is an an N-acyl-1,2-diacyl-sn-glycero-3-phosphoethanolamine binding site. Residue histidine 343 participates in Zn(2+) binding. Position 348 (alanine 348) interacts with deoxycholate.

This sequence belongs to the NAPE-PLD family. As to quaternary structure, homodimer. Bile acids promote the assembly of inactive monomers into an active dimer and enable catalysis. Zn(2+) is required as a cofactor. As to expression, widely expressed. Highest expression in brain, kidney and testis (at protein level). Expressed in adipose tissue (at protein level).

The protein localises to the golgi apparatus membrane. It is found in the early endosome membrane. It localises to the nucleus envelope. The protein resides in the nucleus. Its subcellular location is the nucleoplasm. The enzyme catalyses an N-acyl-1,2-diacyl-sn-glycero-3-phosphoethanolamine + H2O = an N-acylethanolamine + a 1,2-diacyl-sn-glycero-3-phosphate + H(+). It catalyses the reaction N-butanoyl-1-hexadecanoyl-2-(9Z,12Z-octadecadienoyl)-sn-glycero-3-phosphoethanolamine + H2O = N-butanoyl ethanolamine + 1-hexadecanoyl-2-(9Z,12Z-octadecadienoyl)-sn-glycero-3-phosphate + H(+). The catalysed reaction is N-hexanoyl-1-hexadecanoyl-2-(9Z,12Z-octadecadienoyl)-sn-glycero-3-phosphoethanolamine + H2O = N-hexanoyl ethanolamine + 1-hexadecanoyl-2-(9Z,12Z-octadecadienoyl)-sn-glycero-3-phosphate + H(+). It carries out the reaction N-octanoyl-1-hexadecanoyl-2-(9Z,12Z-octadecadienoyl)-sn-glycero-3-phosphoethanolamine + H2O = N-octanoyl ethanolamine + 1-hexadecanoyl-2-(9Z,12Z-octadecadienoyl)-sn-glycero-3-phosphate + H(+). The enzyme catalyses N-decanoyl-1-hexadecanoyl-2-(9Z,12Z-octadecadienoyl)-sn-glycero-3-phosphoethanolamine + H2O = N-decanoyl ethanolamine + 1-hexadecanoyl-2-(9Z,12Z-octadecadienoyl)-sn-glycero-3-phosphate + H(+). It catalyses the reaction N-dodecanoyl-1,2-di-(9Z-octadecenoyl)-sn-glycero-3-phosphoethanolamine + H2O = N-dodecanoylethanolamine + 1,2-di-(9Z-octadecenoyl)-sn-glycero-3-phosphate + H(+). The catalysed reaction is N-tetradecanoyl-1,2-di-(9Z-octadecenoyl)-sn-glycero-3-phosphoethanolamine + H2O = N-tetradecanoylethanolamine + 1,2-di-(9Z-octadecenoyl)-sn-glycero-3-phosphate + H(+). It carries out the reaction N-hexadecanoyl-1,2-di-(9Z-octadecenoyl)-sn-glycero-3-phosphoethanolamine + H2O = N-hexadecanoylethanolamine + 1,2-di-(9Z-octadecenoyl)-sn-glycero-3-phosphate + H(+). The enzyme catalyses N,1-dihexadecanoyl-2-(9Z,12Z-octadecadienoyl)-sn-glycero-3-phosphoethanolamine + H2O = 1-hexadecanoyl-2-(9Z,12Z-octadecadienoyl)-sn-glycero-3-phosphate + N-hexadecanoylethanolamine + H(+). It catalyses the reaction N-octadecanoyl-1,2-di-(9Z-octadecenoyl)-sn-glycero-3-phosphoethanolamine + H2O = N-octadecanoyl ethanolamine + 1,2-di-(9Z-octadecenoyl)-sn-glycero-3-phosphate + H(+). The catalysed reaction is N,1,2-tri-(9Z-octadecenoyl)-sn-glycero-3-phosphoethanolamine + H2O = N-(9Z-octadecenoyl) ethanolamine + 1,2-di-(9Z-octadecenoyl)-sn-glycero-3-phosphate + H(+). It carries out the reaction N-(5Z,8Z,11Z,14Z-eicosatetraenoyl)-1,2-diacyl-sn-glycero-3-phosphoethanolamine + H2O = N-(5Z,8Z,11Z,14Z-eicosatetraenoyl)-ethanolamine + a 1,2-diacyl-sn-glycero-3-phosphate + H(+). The enzyme catalyses N-(5Z,8Z,11Z,14Z-eicosatetraenoyl)-1,2-di-(9Z-octadecenoyl)-sn-glycero-3-phosphoethanolamine + H2O = N-(5Z,8Z,11Z,14Z-eicosatetraenoyl)-ethanolamine + 1,2-di-(9Z-octadecenoyl)-sn-glycero-3-phosphate + H(+). It catalyses the reaction 1-O-(1Z-octadecenoyl)-2-(9Z-octadecenoyl)-sn-glycero-3-phospho-N-hexadecanoyl-ethanolamine + H2O = 1-O-(1Z-octadecenoyl)-2-(9Z-octadecenoyl)-sn-glycero-3-phosphate + N-hexadecanoylethanolamine + H(+). The catalysed reaction is N,1-diacyl-sn-glycero-3-phosphoethanolamine + H2O = an N-acylethanolamine + a 1-acyl-sn-glycero-3-phosphate + H(+). It carries out the reaction N,1-dihexadecanoyl-sn-glycero-3-phosphoethanolamine + H2O = N-hexadecanoylethanolamine + 1-hexadecanoyl-sn-glycero-3-phosphate + H(+). The enzyme catalyses N-(5Z,8Z,11Z,14Z-eicosatetraenoyl)-1-(9Z-octadecenoyl)-sn-glycero-3-phosphoethanolamine + H2O = N-(5Z,8Z,11Z,14Z-eicosatetraenoyl)-ethanolamine + 1-(9Z-octadecenoyl)-sn-glycero-3-phosphate + H(+). Its activity is regulated as follows. Activated by divalent cations. Activated by bile acids. Activated by membrane phospholipids such as phosphatidylethanolamines. Inhibited by cardiolipins. D-type phospholipase that hydrolyzes N-acyl-phosphatidylethanolamines (NAPEs) to produce bioactive N-acylethanolamines/fatty acid ethanolamides (NAEs/FAEs) and phosphatidic acid. Cleaves the terminal phosphodiester bond of diacyl- and alkenylacyl-NAPEs, primarily playing a role in the generation of long-chain saturated and monounsaturated NAEs in the brain. May control NAPE homeostasis in dopaminergic neuron membranes and regulate neuron survival, partly through RAC1 activation. As a regulator of lipid metabolism in the adipose tissue, mediates the crosstalk between adipocytes, gut microbiota and immune cells to control body temperature and weight. In particular, regulates energy homeostasis by promoting cold-induced brown or beige adipocyte differentiation program to generate heat from fatty acids and glucose. Has limited D-type phospholipase activity toward N-acyl lyso-NAPEs. This chain is N-acyl-phosphatidylethanolamine-hydrolyzing phospholipase D (Napepld), found in Rattus norvegicus (Rat).